Consider the following 242-residue polypeptide: Prosalusin (242 aa).

The N-terminal stretch at 1–26 (MAAATRGCRPWGSLLGLLGLVSAAAA) is a signal peptide. Positions 27 to 189 (AWDLASLRCT…SSWVVYGTNY (163 aa)) are excised as a propeptide. 93 to 100 (GWTGTGKS) provides a ligand contact to ATP. N-linked (GlcNAc...) asparagine glycosylation occurs at Asn149. Residues 210-242 (PPRRSGALPPAPAAPRPALRAQRAGPAGPGAKG) form a disordered region. A compositionally biased stretch (low complexity) spans 225 to 235 (RPALRAQRAGP). Residue Lys241 is modified to Lysine amide.

The protein belongs to the ClpA/ClpB family. Torsin subfamily. Post-translationally, amidation of salusin-alpha(29-Gly) by peptidylglycine alpha-amidating monooxygenase, PAM, converts Lys-241-Gly-242 to Lys-241-NH2 and gives raise to salusin-alpha. In terms of tissue distribution, isoform 4 is ubiquitously expressed, with high level in vascular endothelial cells and vascular smooth muscle cells.

The protein resides in the secreted. In terms of biological role, salusins -alpha and -beta may be endocrine and/or paracrine factors able to increase intracellular calcium concentrations and induce cell mitogenesis. Salusins may also be potent hypotensive peptides. This is Prosalusin (TOR2A) from Homo sapiens (Human).